The sequence spans 284 residues: Elongation factor Ts (284 aa).

Residues 80–83 (TDFV) are involved in Mg(2+) ion dislocation from EF-Tu.

Belongs to the EF-Ts family.

The protein resides in the cytoplasm. In terms of biological role, associates with the EF-Tu.GDP complex and induces the exchange of GDP to GTP. It remains bound to the aminoacyl-tRNA.EF-Tu.GTP complex up to the GTP hydrolysis stage on the ribosome. This Neisseria meningitidis serogroup C (strain 053442) protein is Elongation factor Ts.